Reading from the N-terminus, the 426-residue chain is Serine--tRNA ligase (426 aa).

233-235 (TAE) provides a ligand contact to L-serine. 264–266 (RSE) serves as a coordination point for ATP. Glu-287 serves as a coordination point for L-serine. Position 351–354 (351–354 (EISS)) interacts with ATP. Ser-387 provides a ligand contact to L-serine.

It belongs to the class-II aminoacyl-tRNA synthetase family. Type-1 seryl-tRNA synthetase subfamily. In terms of assembly, homodimer. The tRNA molecule binds across the dimer.

It is found in the cytoplasm. The catalysed reaction is tRNA(Ser) + L-serine + ATP = L-seryl-tRNA(Ser) + AMP + diphosphate + H(+). It catalyses the reaction tRNA(Sec) + L-serine + ATP = L-seryl-tRNA(Sec) + AMP + diphosphate + H(+). It participates in aminoacyl-tRNA biosynthesis; selenocysteinyl-tRNA(Sec) biosynthesis; L-seryl-tRNA(Sec) from L-serine and tRNA(Sec): step 1/1. Catalyzes the attachment of serine to tRNA(Ser). Is also able to aminoacylate tRNA(Sec) with serine, to form the misacylated tRNA L-seryl-tRNA(Sec), which will be further converted into selenocysteinyl-tRNA(Sec). In Clostridium botulinum (strain Hall / ATCC 3502 / NCTC 13319 / Type A), this protein is Serine--tRNA ligase.